Consider the following 954-residue polypeptide: MGFSLTDYAPYDFANRRHIGPSPKEMGQMLATLGVPSLEALINEALPEGIRRRDPLAFGPALSERDTLHRMRELADKNTVLTSLIGQGYHGTHTPPVILRNILENPAWYTAYTPYQPEISQGRLEALLNFQTMMADLTGLPIANASLLDEGTAAAEAMAMAQRASKSKARGFFVAEDCHPQTIDVIRTRAEPLGIEVIVGAVDALDPEAVFAALFQYPGSYGHVRDYSDVIEALHGARALAVVAADPLALTLLKSPGEMGADIAIGSTQRFGVPMGYGGPHAAYMTCTDALKRSMPGRIIGVSVDARGNKAYRLSLQTREQHIRREKANSNVCTAQALLAVMASMYGVFHGPDGLKAIAQTVHRKTARMADGLTELGFKVDPQDYFDTITVKVGSMQGVILAAALREGVNLRKVGTDRIGITLDELTLGRTIEAVWRAFGAEGMVYDKTRMVYHLPQEMLRESSYMTHPIFHMNRAEAEMTRYMRRLADRDLALDRAMIPLGSCTMKLNATVEMLPLTWPEFANLHPFAPADQAAGYHEMIAELSQMLCDVTGYDAMSMQPNSGAQGEYAGLLAIRGYHRARGEGHRNICLIPTSAHGTNPASAQMVGWKVVVVKSAENGDIDLEDFRAKAEQHSENLAGCMITYPSTHGVFEEIVREVCDITHAHGGQVYIDGANMNAMVGLSAPGDLGGDVSHLNLHKTFCIPHGGGGPGMGPIGVKAHLAPHLPSHATATGAGFGDAGAVASAAYGSPSILTISYAYCLLMGGAGLTQATKVAILNANYMAKRLSAGFPILYANDKGRVAHECILDTRVLDKIAGVTVEDVAKRLMDCGFHAPTMSWPVAGTLMVEPTESEPKAELDRFCDAMLAIREEADAIAAGSLDAENNPLKRAPHTVEDLVGDWDRPYSREQACYPPGAFRVDKYWPPVNRVDNAYGDRNLVCTCPPVEDYAEPAE.

Lysine 700 carries the post-translational modification N6-(pyridoxal phosphate)lysine.

Belongs to the GcvP family. In terms of assembly, the glycine cleavage system is composed of four proteins: P, T, L and H. Pyridoxal 5'-phosphate is required as a cofactor.

The enzyme catalyses N(6)-[(R)-lipoyl]-L-lysyl-[glycine-cleavage complex H protein] + glycine + H(+) = N(6)-[(R)-S(8)-aminomethyldihydrolipoyl]-L-lysyl-[glycine-cleavage complex H protein] + CO2. The glycine cleavage system catalyzes the degradation of glycine. The P protein binds the alpha-amino group of glycine through its pyridoxal phosphate cofactor; CO(2) is released and the remaining methylamine moiety is then transferred to the lipoamide cofactor of the H protein. This chain is Glycine dehydrogenase (decarboxylating), found in Dinoroseobacter shibae (strain DSM 16493 / NCIMB 14021 / DFL 12).